Consider the following 1010-residue polypeptide: Protein CROWDED NUCLEI 4 (1010 aa).

2 coiled-coil regions span residues 82–350 (LLLL…LIQN) and 404–763 (EKEH…NLER). 2 short sequence motifs (nuclear localization signal) span residues 445–452 (NRKTTMLE) and 679–686 (LKRLDAER). Disordered stretches follow at residues 787-813 (GVST…PSSA), 839-937 (HYEE…TQTP), and 966-994 (DCSE…GINA). The segment covering 849-863 (EKLKLESSRREEKAY) has biased composition (basic and acidic residues). Polar residues-rich tracts occupy residues 883–893 (NTSGDETSEPS) and 912–921 (TQSVISSPQN).

The protein belongs to the CRWN family. In terms of assembly, core component of the LINC complex which is composed of inner nuclear membrane SUN domain-containing proteins coupled to outer nuclear membrane WIP proteins, the nucleoskeletal CRWN/LINC proteins, and, possibly, KAKU4. Binds to KAKU4. In terms of tissue distribution, expressed at low levels in roots, leaves, flowers and flower stalks.

It is found in the nucleus membrane. The protein resides in the nucleus. It localises to the nucleoplasm. Its subcellular location is the nucleus lamina. The protein localises to the cytoplasm. Component of SUN-protein-containing multivariate complexes also called LINC complexes which link the nucleoskeleton and cytoskeleton by providing versatile outer nuclear membrane attachment sites for cytoskeletal filaments. Required for nucleus structure organization (e.g. size and shape). Involved in the maintenance of interphase chromocenter integrity and organization. This chain is Protein CROWDED NUCLEI 4, found in Arabidopsis thaliana (Mouse-ear cress).